The primary structure comprises 575 residues: Proline--tRNA ligase (575 aa).

This sequence belongs to the class-II aminoacyl-tRNA synthetase family. ProS type 1 subfamily. In terms of assembly, homodimer.

It localises to the cytoplasm. It carries out the reaction tRNA(Pro) + L-proline + ATP = L-prolyl-tRNA(Pro) + AMP + diphosphate. In terms of biological role, catalyzes the attachment of proline to tRNA(Pro) in a two-step reaction: proline is first activated by ATP to form Pro-AMP and then transferred to the acceptor end of tRNA(Pro). As ProRS can inadvertently accommodate and process non-cognate amino acids such as alanine and cysteine, to avoid such errors it has two additional distinct editing activities against alanine. One activity is designated as 'pretransfer' editing and involves the tRNA(Pro)-independent hydrolysis of activated Ala-AMP. The other activity is designated 'posttransfer' editing and involves deacylation of mischarged Ala-tRNA(Pro). The misacylated Cys-tRNA(Pro) is not edited by ProRS. This is Proline--tRNA ligase from Desulfitobacterium hafniense (strain DSM 10664 / DCB-2).